The sequence spans 394 residues: Exodeoxyribonuclease 7 large subunit (394 aa).

It belongs to the XseA family. In terms of assembly, heterooligomer composed of large and small subunits.

It is found in the cytoplasm. It carries out the reaction Exonucleolytic cleavage in either 5'- to 3'- or 3'- to 5'-direction to yield nucleoside 5'-phosphates.. Bidirectionally degrades single-stranded DNA into large acid-insoluble oligonucleotides, which are then degraded further into small acid-soluble oligonucleotides. The sequence is that of Exodeoxyribonuclease 7 large subunit from Thermotoga maritima (strain ATCC 43589 / DSM 3109 / JCM 10099 / NBRC 100826 / MSB8).